The chain runs to 1258 residues: Cohesin subunit SA-1 (1258 aa).

The tract at residues 1 to 84 (MITSELPVLQ…HPQQNGEGEP (84 aa)) is disordered. Positions 10–19 (QDSTNETTAH) are enriched in polar residues. A Phosphoserine modification is found at serine 24. Over residues 53-62 (SPGEKSRIEA) the composition is skewed to basic and acidic residues. The SCD domain occupies 296 to 381 (FVHRYRDAIA…NRFKDRIVSM (86 aa)). Phosphoserine is present on residues serine 756, serine 1062, and serine 1065. 2 disordered regions span residues 1055-1096 (GGED…SLDN) and 1129-1148 (MGDQ…DFLH). Residues 1062–1074 (SVNSGSSSSKTSS) are compositionally biased toward low complexity. The segment covering 1076 to 1087 (RNKKGRPPLHKK) has biased composition (basic residues). Serine 1093 carries the phosphoserine modification. Over residues 1137 to 1146 (ESEHGSEPDF) the composition is skewed to basic and acidic residues. A Glycyl lysine isopeptide (Lys-Gly) (interchain with G-Cter in SUMO2) cross-link involves residue lysine 1161.

Belongs to the SCC3 family. Cohesin complexes are composed of a heterodimer between a SMC1 protein (SMC1A or SMC1B) and SMC3, which are attached via their hinge domain, and RAD21 which link them at their heads, and one STAG protein (STAG1, STAG2 or STAG3). In cohesin complexes, STAG1 is mutually exclusive with STAG2 and STAG3. Interacts directly with RAD21 in cohesin complex. The cohesin complex interacts with the cohesin loading complex subunits NIPBL/Scc2 (via HEAT repeats) and MAU2/Scc4. NIPBL directly contacts all members of the complex, RAD21, SMC1A/B, SMC3 and STAG1. In terms of processing, phosphorylated by PLK1. The large dissociation of cohesin from chromosome arms during prophase is partly due to its phosphorylation.

It is found in the nucleus. Its subcellular location is the chromosome. The protein resides in the centromere. Component of cohesin complex, a complex required for the cohesion of sister chromatids after DNA replication. The cohesin complex apparently forms a large proteinaceous ring within which sister chromatids can be trapped. At anaphase, the complex is cleaved and dissociates from chromatin, allowing sister chromatids to segregate. The cohesin complex may also play a role in spindle pole assembly during mitosis. In Homo sapiens (Human), this protein is Cohesin subunit SA-1 (STAG1).